A 70-amino-acid polypeptide reads, in one-letter code: Disintegrin triflavin (70 aa).

The Disintegrin domain maps to 1–70 (GEECDCGSPS…SADCPRWNGL (70 aa)). Disulfide bonds link Cys-4/Cys-19, Cys-6/Cys-14, Cys-13/Cys-36, Cys-27/Cys-33, Cys-32/Cys-57, and Cys-45/Cys-64. Positions 49–51 (RGD) match the Cell attachment site motif.

The protein belongs to the venom metalloproteinase (M12B) family. P-II subfamily. P-IIa sub-subfamily. Monomer. Expressed by the venom gland.

Its subcellular location is the secreted. Functionally, inhibits fibrinogen interaction with platelets. Acts by binding to alpha-IIb/beta-3 (ITGA2B/ITGB3) on the platelet surface and inhibits aggregation induced by ADP, thrombin, platelet-activating factor and collagen. This Protobothrops flavoviridis (Habu) protein is Disintegrin triflavin.